The chain runs to 215 residues: 7-cyano-7-deazaguanine synthase (215 aa).

ATP is bound at residue 8-18 (LSAGLDSTVSL). Positions 191, 199, 202, and 205 each coordinate Zn(2+).

Belongs to the QueC family. As to quaternary structure, homodimer. Zn(2+) is required as a cofactor.

It carries out the reaction 7-carboxy-7-deazaguanine + NH4(+) + ATP = 7-cyano-7-deazaguanine + ADP + phosphate + H2O + H(+). It participates in purine metabolism; 7-cyano-7-deazaguanine biosynthesis. Its function is as follows. Catalyzes the ATP-dependent conversion of 7-carboxy-7-deazaguanine (CDG) to 7-cyano-7-deazaguanine (preQ(0)). This Carboxydothermus hydrogenoformans (strain ATCC BAA-161 / DSM 6008 / Z-2901) protein is 7-cyano-7-deazaguanine synthase.